The primary structure comprises 234 residues: Accessory gland protein Acp29AB (234 aa).

An N-terminal signal peptide occupies residues 1 to 21 (MYASNLLYLLALWNLWDLSGG). Asn61 and Asn164 each carry an N-linked (GlcNAc...) asparagine glycan. A C-type lectin domain is found at 137–234 (VTCRKMNGHL…SFVCQADQWA (98 aa)). 2 disulfide bridges follow: Cys139-Cys228 and Cys207-Cys220.

As to expression, main cells of the accessory gland and in seminal fluid.

It localises to the secreted. Its function is as follows. Responsible for physiological and behavioral changes in mated female flies. The polypeptide is Accessory gland protein Acp29AB (Acp29AB) (Drosophila melanogaster (Fruit fly)).